Reading from the N-terminus, the 445-residue chain is Glutamate-1-semialdehyde 2,1-aminomutase (445 aa).

The residue at position 263 (Lys263) is an N6-(pyridoxal phosphate)lysine.

This sequence belongs to the class-III pyridoxal-phosphate-dependent aminotransferase family. HemL subfamily. Requires pyridoxal 5'-phosphate as cofactor.

The protein localises to the cytoplasm. It carries out the reaction (S)-4-amino-5-oxopentanoate = 5-aminolevulinate. It functions in the pathway porphyrin-containing compound metabolism; protoporphyrin-IX biosynthesis; 5-aminolevulinate from L-glutamyl-tRNA(Glu): step 2/2. The polypeptide is Glutamate-1-semialdehyde 2,1-aminomutase (Haloarcula marismortui (strain ATCC 43049 / DSM 3752 / JCM 8966 / VKM B-1809) (Halobacterium marismortui)).